Here is a 116-residue protein sequence, read N- to C-terminus: Protein Rev (116 aa).

Position 5 is a phosphoserine; by host CK2 (Ser5). The segment at 18-26 (YIKILYQSN) is homomultimerization. A Nuclear localization signal and RNA-binding (RRE) motif is present at residues 34–50 (TRKARRNRRRRWRARQR). Residues 73-84 (LQLPLLEKLHIN) carry the Nuclear export signal and binding to XPO1 motif. The segment at 90–116 (GQGTEKGVGSPQISVESRAVLGSGTKE) is disordered. Residue Ser99 is modified to Phosphoserine; by host.

It belongs to the HIV-1 REV protein family. In terms of assembly, homomultimer; when bound to the RRE. Multimeric assembly is essential for activity and may involve XPO1. Binds to human KPNB1, XPO1, TNPO1, RANBP5 and IPO7. Interacts with the viral Integrase. Interacts with human KHDRBS1. Interacts with human NAP1; this interaction decreases Rev multimerization and stimulates its activity. Interacts with human DEAD-box helicases DDX3 and DDX24; these interactions may serve for viral RNA export to the cytoplasm and packaging, respectively. Interacts with human PSIP1; this interaction may inhibit HIV-1 DNA integration by promoting dissociation of the Integrase-LEDGF/p75 complex. Post-translationally, asymmetrically arginine dimethylated at one site by host PRMT6. Methylation impairs the RNA-binding activity and export of viral RNA from the nucleus to the cytoplasm. In terms of processing, phosphorylated by protein kinase CK2. Presence of, and maybe binding to the N-terminus of the regulatory beta subunit of CK2 is necessary for CK2-mediated Rev's phosphorylation.

It localises to the host nucleus. The protein resides in the host nucleolus. It is found in the host cytoplasm. In terms of biological role, escorts unspliced or incompletely spliced viral pre-mRNAs (late transcripts) out of the nucleus of infected cells. These pre-mRNAs carry a recognition sequence called Rev responsive element (RRE) located in the env gene, that is not present in fully spliced viral mRNAs (early transcripts). This function is essential since most viral proteins are translated from unspliced or partially spliced pre-mRNAs which cannot exit the nucleus by the pathway used by fully processed cellular mRNAs. Rev itself is translated from a fully spliced mRNA that readily exits the nucleus. Rev's nuclear localization signal (NLS) binds directly to KPNB1/Importin beta-1 without previous binding to KPNA1/Importin alpha-1. KPNB1 binds to the GDP bound form of RAN (Ran-GDP) and targets Rev to the nucleus. In the nucleus, the conversion from Ran-GDP to Ran-GTP dissociates Rev from KPNB1 and allows Rev's binding to the RRE in viral pre-mRNAs. Rev multimerization on the RRE via cooperative assembly exposes its nuclear export signal (NES) to the surface. Rev can then form a complex with XPO1/CRM1 and Ran-GTP, leading to nuclear export of the complex. Conversion from Ran-GTP to Ran-GDP mediates dissociation of the Rev/RRE/XPO1/RAN complex, so that Rev can return to the nucleus for a subsequent round of export. Beside KPNB1, also seems to interact with TNPO1/Transportin-1, RANBP5/IPO5 and IPO7/RANBP7 for nuclear import. The nucleoporin-like HRB/RIP is an essential cofactor that probably indirectly interacts with Rev to release HIV RNAs from the perinuclear region to the cytoplasm. The sequence is that of Protein Rev from Human immunodeficiency virus type 1 group M subtype F2 (isolate MP257) (HIV-1).